The following is a 335-amino-acid chain: Tetraacyldisaccharide 4'-kinase (335 aa).

Residue 58-65 coordinates ATP; the sequence is TMGGAGKT.

Belongs to the LpxK family.

The catalysed reaction is a lipid A disaccharide + ATP = a lipid IVA + ADP + H(+). Its pathway is glycolipid biosynthesis; lipid IV(A) biosynthesis; lipid IV(A) from (3R)-3-hydroxytetradecanoyl-[acyl-carrier-protein] and UDP-N-acetyl-alpha-D-glucosamine: step 6/6. Its function is as follows. Transfers the gamma-phosphate of ATP to the 4'-position of a tetraacyldisaccharide 1-phosphate intermediate (termed DS-1-P) to form tetraacyldisaccharide 1,4'-bis-phosphate (lipid IVA). In Caulobacter vibrioides (strain ATCC 19089 / CIP 103742 / CB 15) (Caulobacter crescentus), this protein is Tetraacyldisaccharide 4'-kinase.